The following is a 509-amino-acid chain: Maturase K (509 aa).

It belongs to the intron maturase 2 family. MatK subfamily.

The protein resides in the plastid. It is found in the chloroplast. In terms of biological role, usually encoded in the trnK tRNA gene intron. Probably assists in splicing its own and other chloroplast group II introns. This is Maturase K from Anthocercis angustifolia (Narrow-leaf ray-flower).